Consider the following 168-residue polypeptide: MASVKSFKRKYLKLRKSFDSVVLETEEIEQKIAEISEVYRRILLENAHLNDLLIDMNSTVLPTPPASPPGSPYWEAKPVSHTVFLESPSDVFTLEKPIASTHRWLSKLTALSKSTNSTLSTPKSFHSPLQSRGISPSSAQSSAAVSSSRKQKRKRTSEGPSERRARKK.

Over residues Thr115–Leu129 the composition is skewed to polar residues. The segment at Thr115 to Lys168 is disordered. Over residues Gln130–Ser148 the composition is skewed to low complexity. Residues Thr156–Lys168 are compositionally biased toward basic and acidic residues.

As to quaternary structure, component of the INO80 chromatin remodeling complex.

The protein resides in the nucleus. Component of the INO80 complex which remodels chromatin by shifting nucleosomes and is involved in DNA repair. This chain is INO80 complex subunit 3 (iec3), found in Schizosaccharomyces pombe (strain 972 / ATCC 24843) (Fission yeast).